The chain runs to 200 residues: Regulator of G-protein signaling 16 (200 aa).

2 S-palmitoyl cysteine lipidation sites follow: Cys2 and Cys12. One can recognise an RGS domain in the interval 65 to 181; that stretch reads SFDLLLSSKN…LKSPAYRDLA (117 aa). Phosphotyrosine is present on residues Tyr168 and Tyr177.

In terms of assembly, interacts with GNAI1 and GNAQ. Interacts with GNAI3, GNAI3 and GNAO1. (Microbial infection) Interacts with porcine circovirus 2 ORF3 protein. In terms of processing, palmitoylated on Cys-2 and/or Cys-12. Post-translationally, phosphorylated. Phosphorylation at Tyr-168 by EGFR enhances GTPase accelerating (GAP) activity toward GNAI1.

It is found in the membrane. Regulates G protein-coupled receptor signaling cascades. Inhibits signal transduction by increasing the GTPase activity of G protein alpha subunits, thereby driving them into their inactive GDP-bound form. Plays an important role in the phototransduction cascade by regulating the lifetime and effective concentration of activated transducin alpha. May regulate extra and intracellular mitogenic signals. Its function is as follows. (Microbial infection) Gets inactivated and/or degraded by porcine circovirus 2 ORF3 protein, leading to enhanced expression of IL-6 and IL-8 in infected lymphocytes. This would explain chronic inflammatory response of PCV2 infected pigs. The sequence is that of Regulator of G-protein signaling 16 (RGS16) from Sus scrofa (Pig).